Reading from the N-terminus, the 466-residue chain is Neuraminidase (466 aa).

Over 1-8 (MLPSTVQT) the chain is Intravirion. A helical transmembrane segment spans residues 9 to 31 (LTLLLTSGGVLLSLYVSASLSYL). Residues 13-35 (LTSGGVLLSLYVSASLSYLLYSD) are involved in apical transport and lipid raft association. Residues 32-466 (LYSDVLLKFS…DTVTGVDMAL (435 aa)) lie on the Virion surface side of the membrane. Residues 38-86 (LKFSSTKTTAPTMSLECTNASNAQTVNHSATKEMTFPPPEPEWTYPRLS) are hypervariable stalk region. N-linked (GlcNAc...) asparagine; by host glycosylation is found at Asn-56 and Asn-64. 8 cysteine pairs are disulfide-bonded: Cys-87–Cys-420, Cys-122–Cys-127, Cys-182–Cys-229, Cys-231–Cys-236, Cys-277–Cys-291, Cys-279–Cys-289, Cys-318–Cys-337, and Cys-424–Cys-447. Residues 89-466 (GSTFQKALLI…DTVTGVDMAL (378 aa)) form a head of neuraminidase region. Arg-116 lines the substrate pocket. Residue Asn-144 is glycosylated (N-linked (GlcNAc...) asparagine; by host). Catalysis depends on Asp-149, which acts as the Proton donor/acceptor. Position 150 (Arg-150) interacts with substrate. 275 to 276 (EE) provides a ligand contact to substrate. A glycan (N-linked (GlcNAc...) asparagine; by host) is linked at Asn-284. Substrate is bound at residue Arg-292. Asp-293, Thr-297, Asp-324, and Gly-346 together coordinate Ca(2+). Arg-374 contributes to the substrate binding site. The active-site Nucleophile is Tyr-409.

It belongs to the glycosyl hydrolase 34 family. As to quaternary structure, homotetramer. Ca(2+) is required as a cofactor. N-glycosylated.

The protein resides in the virion membrane. It localises to the host apical cell membrane. The catalysed reaction is Hydrolysis of alpha-(2-&gt;3)-, alpha-(2-&gt;6)-, alpha-(2-&gt;8)- glycosidic linkages of terminal sialic acid residues in oligosaccharides, glycoproteins, glycolipids, colominic acid and synthetic substrates.. Its activity is regulated as follows. Inhibited by the neuraminidase inhibitors zanamivir (Relenza) and oseltamivir (Tamiflu). These drugs interfere with the release of progeny virus from infected cells and are effective against all influenza strains. Resistance to neuraminidase inhibitors is quite rare. Functionally, catalyzes the removal of terminal sialic acid residues from viral and cellular glycoconjugates. Cleaves off the terminal sialic acids on the glycosylated HA during virus budding to facilitate virus release. Additionally helps virus spread through the circulation by further removing sialic acids from the cell surface. These cleavages prevent self-aggregation and ensure the efficient spread of the progeny virus from cell to cell. Otherwise, infection would be limited to one round of replication. Described as a receptor-destroying enzyme because it cleaves a terminal sialic acid from the cellular receptors. May facilitate viral invasion of the upper airways by cleaving the sialic acid moieties on the mucin of the airway epithelial cells. Likely to plays a role in the budding process through its association with lipid rafts during intracellular transport. May additionally display a raft-association independent effect on budding. Plays a role in the determination of host range restriction on replication and virulence. Sialidase activity in late endosome/lysosome traffic seems to enhance virus replication. The chain is Neuraminidase from Influenza B virus (strain B/Lee/1940).